The chain runs to 213 residues: 3-demethoxyubiquinol 3-hydroxylase (213 aa).

Residues E62, E92, H95, E144, E176, and H179 each coordinate Fe cation.

This sequence belongs to the COQ7 family. Fe cation serves as cofactor.

The protein resides in the cell membrane. The catalysed reaction is a 5-methoxy-2-methyl-3-(all-trans-polyprenyl)benzene-1,4-diol + AH2 + O2 = a 3-demethylubiquinol + A + H2O. It functions in the pathway cofactor biosynthesis; ubiquinone biosynthesis. In terms of biological role, catalyzes the hydroxylation of 2-nonaprenyl-3-methyl-6-methoxy-1,4-benzoquinol during ubiquinone biosynthesis. This Psychrobacter sp. (strain PRwf-1) protein is 3-demethoxyubiquinol 3-hydroxylase.